The chain runs to 261 residues: Zinc finger protein 664 (261 aa).

9 consecutive C2H2-type zinc fingers follow at residues 3 to 25, 31 to 53, 59 to 81, 87 to 109, 115 to 137, 143 to 165, 171 to 193, 199 to 221, and 227 to 249; these read YKCP…QKIH, HKCD…WRDH, YKCD…KKIH, YKCY…MRVH, YVCS…QRVH, FKCE…QRVH, YKCY…QRVH, YRCC…QRVH, and FKCD…QRVH. Lys257 participates in a covalent cross-link: Glycyl lysine isopeptide (Lys-Gly) (interchain with G-Cter in SUMO2).

It belongs to the krueppel C2H2-type zinc-finger protein family.

Its subcellular location is the nucleus. In terms of biological role, may be involved in transcriptional regulation. This is Zinc finger protein 664 (ZNF664) from Pongo abelii (Sumatran orangutan).